A 713-amino-acid chain; its full sequence is Cadherin-13 (713 aa).

An N-terminal signal peptide occupies residues 1 to 22; the sequence is MQPATPLVLCVLLSQVLLLTSA. The propeptide occupies 23-138; the sequence is EDLDCTPGFQ…RTSPVPRQKR (116 aa). Residues Asn52 and Asn86 are each glycosylated (N-linked (GlcNAc...) asparagine). Cadherin domains follow at residues 139 to 245, 246 to 363, 364 to 477, 478 to 585, and 584 to 694; these read SIVV…RPIF, REGP…SPKF, TKKE…SPVF, YPDP…APFI, and FIYP…AAGA. The disordered stretch occupies residues 156–178; sequence PRDVGKVVDSDRPEGSKFRLTGK. A compositionally biased stretch (basic and acidic residues) spans 158–172; sequence DVGKVVDSDRPEGSK. 7 N-linked (GlcNAc...) asparagine glycosylation sites follow: Asn382, Asn489, Asn500, Asn530, Asn598, Asn638, and Asn671. Gly693 carries GPI-anchor amidated glycine lipidation. A propeptide spans 694–713 (removed in mature form); that stretch reads APHFSAATALLLSLFSLARL.

In terms of assembly, by contrast to classical cadherins, homodimerization in trans is not mediated by cadherin EC1 domain strand-swapping, but instead through a homophilic adhesive interface which joins two elongated EC1-EC2 domains through a region near their Ca2+-binding sites to form a tetrahedral, X-like shape.

It localises to the cell membrane. Its subcellular location is the cytoplasm. Its function is as follows. Cadherins are calcium-dependent cell adhesion proteins. They preferentially interact with themselves in a homophilic manner in connecting cells; cadherins may thus contribute to the sorting of heterogeneous cell types. May act as a negative regulator of neural cell growth. This chain is Cadherin-13 (CDH13), found in Bos taurus (Bovine).